The chain runs to 708 residues: Probable GTP diphosphokinase RSH3, chloroplastic (708 aa).

Disordered regions lie at residues 1 to 50 (MSLP…AAGG) and 109 to 134 (HSPV…SWLA). The N-terminal 58 residues, 1–58 (MSLPAISLYTSPPPGAVYSSEFDPSSRGSSPPCSTAPPSTSHRPPAAAGGLSCLFSSP), are a transit peptide targeting the chloroplast. Composition is skewed to low complexity over residues 29-41 (SSPP…PSTS) and 118-131 (PSSS…PPAS). An HD domain is found at 233 to 337 (YLQHCVETAV…IKLADRVHNM (105 aa)).

This sequence belongs to the RelA/SpoT family.

Its subcellular location is the plastid. It localises to the chloroplast. The enzyme catalyses GTP + ATP = guanosine 3'-diphosphate 5'-triphosphate + AMP. In terms of biological role, probable ppGpp (guanosine 3'-diphosphate 5'-diphosphate) synthetase that may be involved in a rapid plant ppGpp-mediated response to pathogens and other stresses. In Oryza sativa subsp. japonica (Rice), this protein is Probable GTP diphosphokinase RSH3, chloroplastic (RSH3).